The primary structure comprises 276 residues: Monoglyceride lipase homolog (276 aa).

The protein belongs to the orthopoxvirus OPG043 family.

The protein is Monoglyceride lipase homolog (OPG043) of Cynomys gunnisoni (Gunnison's prairie dog).